The primary structure comprises 315 residues: Probable cell division protein WhiA (315 aa).

Residues S280–Q313 constitute a DNA-binding region (H-T-H motif).

The protein belongs to the WhiA family.

Involved in cell division and chromosome segregation. The chain is Probable cell division protein WhiA from Clostridium botulinum (strain ATCC 19397 / Type A).